We begin with the raw amino-acid sequence, 411 residues long: Meiotically up-regulated gene 147 protein (411 aa).

3 disordered regions span residues 1–52 (MLAQ…FENK), 102–137 (EREE…ELAD), and 156–191 (HQHE…HYES). Residues 33–43 (TQNESNLQQSE) are compositionally biased toward polar residues. The segment covering 156–172 (HQHEDEFSSSNKDKGFT) has biased composition (basic and acidic residues).

Its subcellular location is the cytoplasm. It localises to the nucleus. In terms of biological role, has a role in meiosis. This Schizosaccharomyces pombe (strain 972 / ATCC 24843) (Fission yeast) protein is Meiotically up-regulated gene 147 protein (mug147).